We begin with the raw amino-acid sequence, 141 residues long: HTH-type transcriptional repressor NsrR (141 aa).

The HTH rrf2-type domain occupies 2–129 (QLTSFTDYAL…DDCTIEELLS (128 aa)). A DNA-binding region (H-T-H motif) is located at residues 28–51 (ITEVTDLFGVSRNHMVKVINRLGQ). Cys-91, Cys-96, and Cys-102 together coordinate [2Fe-2S] cluster.

Requires [2Fe-2S] cluster as cofactor.

In terms of biological role, nitric oxide-sensitive repressor of genes involved in protecting the cell against nitrosative stress. May require iron for activity. In Vibrio campbellii (strain ATCC BAA-1116), this protein is HTH-type transcriptional repressor NsrR.